Reading from the N-terminus, the 561-residue chain is 2-succinyl-5-enolpyruvyl-6-hydroxy-3-cyclohexene-1-carboxylate synthase (561 aa).

The protein belongs to the TPP enzyme family. MenD subfamily. In terms of assembly, homodimer. The cofactor is Mg(2+). Mn(2+) serves as cofactor. Requires thiamine diphosphate as cofactor.

It catalyses the reaction isochorismate + 2-oxoglutarate + H(+) = 5-enolpyruvoyl-6-hydroxy-2-succinyl-cyclohex-3-ene-1-carboxylate + CO2. Its pathway is quinol/quinone metabolism; 1,4-dihydroxy-2-naphthoate biosynthesis; 1,4-dihydroxy-2-naphthoate from chorismate: step 2/7. It participates in cofactor biosynthesis; phylloquinone biosynthesis. Functionally, catalyzes the thiamine diphosphate-dependent decarboxylation of 2-oxoglutarate and the subsequent addition of the resulting succinic semialdehyde-thiamine pyrophosphate anion to isochorismate to yield 2-succinyl-5-enolpyruvyl-6-hydroxy-3-cyclohexene-1-carboxylate (SEPHCHC). In Synechococcus sp. (strain CC9605), this protein is 2-succinyl-5-enolpyruvyl-6-hydroxy-3-cyclohexene-1-carboxylate synthase.